Consider the following 358-residue polypeptide: Uroporphyrinogen decarboxylase (358 aa).

Substrate-binding positions include 28 to 32, D78, Y154, S208, and H324; that span reads RQAGR.

This sequence belongs to the uroporphyrinogen decarboxylase family. Homodimer.

Its subcellular location is the cytoplasm. The enzyme catalyses uroporphyrinogen III + 4 H(+) = coproporphyrinogen III + 4 CO2. Its pathway is porphyrin-containing compound metabolism; protoporphyrin-IX biosynthesis; coproporphyrinogen-III from 5-aminolevulinate: step 4/4. In terms of biological role, catalyzes the decarboxylation of four acetate groups of uroporphyrinogen-III to yield coproporphyrinogen-III. This chain is Uroporphyrinogen decarboxylase, found in Acidiphilium cryptum (strain JF-5).